Reading from the N-terminus, the 189-residue chain is Ribosome maturation factor RimM (189 aa).

The 74-residue stretch at 96-169 folds into the PRC barrel domain; the sequence is EDEFYYADLE…TLLIDPLAAG (74 aa).

The protein belongs to the RimM family. Binds ribosomal protein uS19.

The protein resides in the cytoplasm. An accessory protein needed during the final step in the assembly of 30S ribosomal subunit, possibly for assembly of the head region. Essential for efficient processing of 16S rRNA. May be needed both before and after RbfA during the maturation of 16S rRNA. It has affinity for free ribosomal 30S subunits but not for 70S ribosomes. This Rhizobium johnstonii (strain DSM 114642 / LMG 32736 / 3841) (Rhizobium leguminosarum bv. viciae) protein is Ribosome maturation factor RimM.